Reading from the N-terminus, the 504-residue chain is Protein FMP42 (504 aa).

The Vacuolar portion of the chain corresponds to Met1 to Gln11. Residues Val12 to Leu32 form a helical membrane-spanning segment. The Cytoplasmic portion of the chain corresponds to Lys33–Asn64. The chain crosses the membrane as a helical span at residues Phe65–Leu85. The Vacuolar segment spans residues Asp86–Arg91. The helical transmembrane segment at Val92–Lys112 threads the bilayer. Residues His113 to Asp119 lie on the Cytoplasmic side of the membrane. Residues Pro120–Phe140 traverse the membrane as a helical segment. Residues Gln141–Ser150 are Vacuolar-facing. Residues Gly151–Tyr171 traverse the membrane as a helical segment. Residues Arg172–Arg186 are Cytoplasmic-facing. The helical transmembrane segment at Phe187 to Pro207 threads the bilayer. Topologically, residues His208 to Pro302 are vacuolar. Ser238, Ser249, and Ser269 each carry phosphoserine. Residues Trp303 to Ala323 traverse the membrane as a helical segment. Topologically, residues Thr324 to Ser344 are cytoplasmic. A helical membrane pass occupies residues Ile345–Leu365. Residues Asp366–Gly385 lie on the Vacuolar side of the membrane. Residues Val386–Val406 traverse the membrane as a helical segment. Topologically, residues Tyr407–Lys421 are cytoplasmic. A helical transmembrane segment spans residues Val422–Phe442. Residues Asn443–Phe462 lie on the Vacuolar side of the membrane. Residues Pro463–Ile483 form a helical membrane-spanning segment. Residues Arg484–Ile504 lie on the Cytoplasmic side of the membrane.

The protein belongs to the SLC43A transporter (TC 2.A.1.44) family.

The protein localises to the vacuole membrane. The sequence is that of Protein FMP42 (FMP42) from Saccharomyces cerevisiae (strain ATCC 204508 / S288c) (Baker's yeast).